The chain runs to 1470 residues: Histone acetyltransferase HAC4 (1470 aa).

Polar residues predominate over residues methionine 1–asparagine 10. 2 disordered regions span residues methionine 1 to alanine 20 and threonine 342 to asparagine 376. A compositionally biased stretch (low complexity) spans serine 11–alanine 20. Positions threonine 342–glycine 365 are enriched in polar residues. The TAZ-type 1 zinc finger occupies glycine 416 to valine 495. The disordered stretch occupies residues serine 518–glutamate 566. Over residues glutamine 522 to tyrosine 533 the composition is skewed to basic residues. A PHD-type zinc finger spans residues histidine 764–glutamine 841. Residues valine 856 to alanine 1293 form the CBP/p300-type HAT domain. Residues leucine 979–serine 981, arginine 998–threonine 999, and tryptophan 1054 each bind acetyl-CoA. 2 ZZ-type zinc fingers span residues histidine 1175–valine 1238 and alanine 1295–aspartate 1347. Zn(2+) is bound by residues cysteine 1180, cysteine 1183, cysteine 1195, cysteine 1198, cysteine 1204, cysteine 1207, histidine 1220, histidine 1228, cysteine 1300, cysteine 1303, cysteine 1315, cysteine 1318, cysteine 1324, cysteine 1327, histidine 1335, and histidine 1337. Residues serine 1358–leucine 1436 form a TAZ-type 2 zinc finger.

In terms of tissue distribution, rosette leaves, stems and flowers.

The protein resides in the nucleus. The enzyme catalyses L-lysyl-[protein] + acetyl-CoA = N(6)-acetyl-L-lysyl-[protein] + CoA + H(+). Its function is as follows. Acetyltransferase enzyme. Acetylates histones, giving a specific tag for transcriptional activation. The chain is Histone acetyltransferase HAC4 (HAC4) from Arabidopsis thaliana (Mouse-ear cress).